Consider the following 333-residue polypeptide: GDP-fucose transporter 1 (333 aa).

The next 8 helical transmembrane spans lie at 13 to 33, 45 to 65, 95 to 115, 139 to 159, 169 to 189, 211 to 231, 239 to 259, and 293 to 313; these read SIKI…MVFL, APMF…FILG, LVFV…GVAF, TSMP…VGVN, MAGI…AIYI, AIFL…IAAS, YWFL…VSML, and TATW…YVLV.

It belongs to the TPT transporter family. SLC35C subfamily.

The protein resides in the golgi apparatus membrane. The catalysed reaction is GMP(out) + GDP-beta-L-fucose(in) = GMP(in) + GDP-beta-L-fucose(out). Its function is as follows. Antiporter specific for GDP-l-fucose and depending on the concomitant reverse transport of GMP. Involved in GDP-fucose import from the cytoplasm into the Golgi lumen. The polypeptide is GDP-fucose transporter 1 (slc35c1) (Monosiga brevicollis (Choanoflagellate)).